A 398-amino-acid chain; its full sequence is Cysteine protease ATG4A (398 aa).

Cys77 functions as the Nucleophile in the catalytic mechanism. Catalysis depends on residues Asp279 and His281. Positions 393–396 (FEIL) match the LIR motif.

This sequence belongs to the peptidase C54 family. Interacts with ATG9A; the interaction is direct.

It localises to the cytoplasm. It catalyses the reaction [protein]-C-terminal L-amino acid-glycyl-phosphatidylethanolamide + H2O = [protein]-C-terminal L-amino acid-glycine + a 1,2-diacyl-sn-glycero-3-phosphoethanolamine. Inhibited by N-ethylmaleimide. Redox-regulated during autophagy since reducing conditions activate ATG4A whereas an oxidizing environment such as the presence of H(2)O(2) inhibits its activity. Its function is as follows. Cysteine protease that plays a key role in autophagy by mediating both proteolytic activation and delipidation of ATG8 family proteins. The protease activity is required for proteolytic activation of ATG8 family proteins: cleaves the C-terminal amino acid of ATG8 proteins to reveal a C-terminal glycine. Exposure of the glycine at the C-terminus is essential for ATG8 proteins conjugation to phosphatidylethanolamine (PE) and insertion to membranes, which is necessary for autophagy. Preferred substrate is GABARAPL2 followed by MAP1LC3A and GABARAP. Protease activity is also required to counteract formation of high-molecular weight conjugates of ATG8 proteins (ATG8ylation): acts as a deubiquitinating-like enzyme that removes ATG8 conjugated to other proteins, such as ATG3. In addition to the protease activity, also mediates delipidation of ATG8 family proteins. Catalyzes delipidation of PE-conjugated forms of ATG8 proteins during macroautophagy. Compared to ATG4B, the major protein for proteolytic activation of ATG8 proteins, shows weaker ability to cleave the C-terminal amino acid of ATG8 proteins, while it displays stronger delipidation activity. Involved in phagophore growth during mitophagy independently of its protease activity and of ATG8 proteins: acts by regulating ATG9A trafficking to mitochondria and promoting phagophore-endoplasmic reticulum contacts during the lipid transfer phase of mitophagy. The polypeptide is Cysteine protease ATG4A (Pongo abelii (Sumatran orangutan)).